We begin with the raw amino-acid sequence, 256 residues long: MAVGKNKRLSKGKKGIKKRTVDPFTRKDEYSVKAPSTFANRDVGKTLVNRTSGLKNANDSLKGRIFEVSLADLQGDEDHAFRKVKLRVDEIQGKNCLTNFHGLDFTTDKLRSLVRKWQSLIEANVTVKTTDDYLLRLFAIAFTKRRPNQIKKTTYARSSQIRAIRKKMTEIMQREASSCSLAQLTSKLIPEVIGREIEKATQGIYPLQHVHIRKVKLLKSPKFDLGALLNLHGESTTDDKGQKVEREFKEQVLESV.

The span at 1–18 shows a compositional bias: basic residues; sequence MAVGKNKRLSKGKKGIKK. The segment at 1–20 is disordered; that stretch reads MAVGKNKRLSKGKKGIKKRT. At Ala2 the chain carries N-acetylalanine; partial.

It belongs to the eukaryotic ribosomal protein eS1 family. As to quaternary structure, component of the small ribosomal subunit. Mature ribosomes consist of a small (40S) and a large (60S) subunit. The 40S subunit contains about 33 different proteins and 1 molecule of RNA (18S). The 60S subunit contains about 49 different proteins and 3 molecules of RNA (25S, 5.8S and 5S).

It is found in the cytoplasm. In Emericella nidulans (strain FGSC A4 / ATCC 38163 / CBS 112.46 / NRRL 194 / M139) (Aspergillus nidulans), this protein is Small ribosomal subunit protein eS1 (rps1).